A 324-amino-acid chain; its full sequence is CIMIP2 protein GA14893 (324 aa).

Belongs to the CIMIP2 family.

It is found in the cytoplasm. The protein resides in the cytoskeleton. The protein localises to the cilium axoneme. Functionally, probable microtubule inner protein (MIP) part of the dynein-decorated doublet microtubules (DMTs) in cilium axoneme. This Drosophila pseudoobscura pseudoobscura (Fruit fly) protein is CIMIP2 protein GA14893.